The chain runs to 469 residues: 3-isopropylmalate dehydratase large subunit (469 aa).

Positions 349, 410, and 413 each coordinate [4Fe-4S] cluster.

This sequence belongs to the aconitase/IPM isomerase family. LeuC type 1 subfamily. In terms of assembly, heterodimer of LeuC and LeuD. Requires [4Fe-4S] cluster as cofactor.

The enzyme catalyses (2R,3S)-3-isopropylmalate = (2S)-2-isopropylmalate. It participates in amino-acid biosynthesis; L-leucine biosynthesis; L-leucine from 3-methyl-2-oxobutanoate: step 2/4. Catalyzes the isomerization between 2-isopropylmalate and 3-isopropylmalate, via the formation of 2-isopropylmaleate. This chain is 3-isopropylmalate dehydratase large subunit, found in Aromatoleum aromaticum (strain DSM 19018 / LMG 30748 / EbN1) (Azoarcus sp. (strain EbN1)).